The sequence spans 893 residues: DNA mismatch repair protein MutS (893 aa).

631-638 (GPNMAGKS) provides a ligand contact to ATP. Residues 821 to 858 (AGRPRVAVRQPQGGRRGASTGQLGLFGMEPAQGGTGVT) form a disordered region.

It belongs to the DNA mismatch repair MutS family.

Its function is as follows. This protein is involved in the repair of mismatches in DNA. It is possible that it carries out the mismatch recognition step. This protein has a weak ATPase activity. This Myxococcus xanthus (strain DK1622) protein is DNA mismatch repair protein MutS.